A 327-amino-acid polypeptide reads, in one-letter code: 4-diphosphocytidyl-2-C-methyl-D-erythritol kinase (327 aa).

Lys14 is an active-site residue. ATP is bound at residue 97 to 107 (PDGAGLGGGSA). Asp140 is an active-site residue.

This sequence belongs to the GHMP kinase family. IspE subfamily.

The enzyme catalyses 4-CDP-2-C-methyl-D-erythritol + ATP = 4-CDP-2-C-methyl-D-erythritol 2-phosphate + ADP + H(+). It functions in the pathway isoprenoid biosynthesis; isopentenyl diphosphate biosynthesis via DXP pathway; isopentenyl diphosphate from 1-deoxy-D-xylulose 5-phosphate: step 3/6. Functionally, catalyzes the phosphorylation of the position 2 hydroxy group of 4-diphosphocytidyl-2C-methyl-D-erythritol. The protein is 4-diphosphocytidyl-2-C-methyl-D-erythritol kinase of Oleidesulfovibrio alaskensis (strain ATCC BAA-1058 / DSM 17464 / G20) (Desulfovibrio alaskensis).